The sequence spans 490 residues: GTPase Der (490 aa).

EngA-type G domains lie at proline 3–methionine 166 and isoleucine 200–threonine 373. GTP is bound by residues glycine 9–serine 16, aspartate 56–isoleucine 60, asparagine 118–aspartate 121, glycine 206–serine 213, aspartate 253–valine 257, and asparagine 318–aspartate 321. The 85-residue stretch at arginine 374–glycine 458 folds into the KH-like domain.

It belongs to the TRAFAC class TrmE-Era-EngA-EngB-Septin-like GTPase superfamily. EngA (Der) GTPase family. Associates with the 50S ribosomal subunit.

Its function is as follows. GTPase that plays an essential role in the late steps of ribosome biogenesis. The polypeptide is GTPase Der (Shewanella halifaxensis (strain HAW-EB4)).